Here is a 773-residue protein sequence, read N- to C-terminus: Transducin-like enhancer protein 4 (773 aa).

3 disordered regions span residues 1 to 22, 140 to 162, and 182 to 357; these read MIRD…QPAQ, HGHG…AIPP, and LPIK…DPLA. The interval 1 to 136 is q domain; that stretch reads MIRDLSKMYP…AIIGQQLQAQ (136 aa). The GP domain stretch occupies residues 137–204; that stretch reads HLSHGHGLPV…HQRDRDSIKS (68 aa). The span at 183 to 202 shows a compositional bias: basic and acidic residues; it reads PIKDEKKHHDNDHQRDRDSI. Low complexity predominate over residues 203–214; sequence KSSSVSPSASFR. The segment at 205 to 274 is ccN domain; the sequence is SSVSPSASFR…SPRGSPAHSP (70 aa). Ser208, Ser212, Ser216, and Ser222 each carry phosphoserine. The span at 215–252 shows a compositional bias: basic and acidic residues; that stretch reads GSEKHRNSTDYSSESKKQKTEEKEIAARYDSDGEKSDD. An N6-acetyllysine modification is found at Lys237. At Ser245 the chain carries Phosphoserine. Ser250 is modified (phosphoserine; by CK2). The residue at position 265 (Ser265) is a Phosphoserine; by CDK1. Phosphoserine is present on residues Ser269 and Ser273. The span at 273-289 shows a compositional bias: basic and acidic residues; that stretch reads SPRENGLDKTRLLKKDA. The interval 275-452 is SP domain; it reads RENGLDKTRL…PGGKPAYSFH (178 aa). Residue Lys281 is modified to N6-acetyllysine. Residues 290–305 show a composition bias toward low complexity; it reads PISPASVASSSSTPSS. Ser292 carries the post-translational modification Phosphoserine. The segment covering 317–328 has biased composition (polar residues); sequence TTPVSKSNTPTP. Thr318 bears the Phosphothreonine mark. Phosphoserine is present on residues Ser321 and Ser323. 4 positions are modified to phosphothreonine: Thr325, Thr327, Thr334, and Thr340. Ser419 bears the Phosphoserine mark. 7 WD repeats span residues 485–523, 531–570, 575–614, 617–656, 658–697, 699–738, and 740–773; these read NHGE…NKSP, NRDN…PRIK, SSAP…LVRQ, GHTD…QLQQ, DFTS…KYQL, LHES…SIFQ, and KESS…EVIY.

This sequence belongs to the WD repeat Groucho/TLE family. In terms of assembly, homooligomer and heterooligomer with other family members. Interacts with PAX5. Interacts with LEF1, TCF7, TCF7L1 and TCF7L2. Interacts with ZNF703; TLE4 may mediate ZNF703 transcriptional repression. Interacts with SIX3 and SIX6. Interacts with PAX2. Interacts with TLE1. Post-translationally, phosphorylated. PAX5 binding increases phosphorylation. In terms of processing, ubiquitinated by XIAP/BIRC4. As to expression, expressed in bone marrow-derived macrophages.

The protein localises to the nucleus. Functionally, transcriptional corepressor that binds to a number of transcription factors. Inhibits the transcriptional activation mediated by PAX5, and by CTNNB1 and TCF family members in Wnt signaling. The effects of full-length TLE family members may be modulated by association with dominant-negative AES. Essential for the transcriptional repressor activity of SIX3 during retina and lens development and for SIX3 transcriptional auto-repression. Involved in transcriptional repression of GNRHR and enhances MSX1-mediated transcriptional repression of CGA/alpha-GSU. The polypeptide is Transducin-like enhancer protein 4 (Tle4) (Mus musculus (Mouse)).